The chain runs to 69 residues: uncharacterized protein (69 aa).

A helical transmembrane segment spans residues 13-35 (IRSINPTLLNFINYFLLIVPQFI).

It localises to the membrane. This is an uncharacterized protein from Saccharomyces cerevisiae (strain ATCC 204508 / S288c) (Baker's yeast).